We begin with the raw amino-acid sequence, 326 residues long: Glycolipid sulfotransferase MRA_1383 (326 aa).

40 to 45 lines the 3'-phosphoadenylyl sulfate pocket; sequence KSGLTW. H97 acts as the Proton acceptor in catalysis. 116-124 contributes to the 3'-phosphoadenylyl sulfate binding site; sequence RDPRDAAVS.

It belongs to the sulfotransferase 1 family.

In terms of biological role, involved in the synthesis of cell wall sulfolipids. This is Glycolipid sulfotransferase MRA_1383 from Mycobacterium tuberculosis (strain ATCC 25177 / H37Ra).